The chain runs to 263 residues: Purine nucleoside phosphorylase SERP0752 (263 aa).

The Zn(2+) site is built by H79, C124, and H141.

Belongs to the purine nucleoside phosphorylase YfiH/LACC1 family. In terms of assembly, homodimer. Cu(2+) is required as a cofactor. It depends on Zn(2+) as a cofactor.

It carries out the reaction adenosine + phosphate = alpha-D-ribose 1-phosphate + adenine. It catalyses the reaction S-methyl-5'-thioadenosine + phosphate = 5-(methylsulfanyl)-alpha-D-ribose 1-phosphate + adenine. The enzyme catalyses inosine + phosphate = alpha-D-ribose 1-phosphate + hypoxanthine. The catalysed reaction is adenosine + H2O + H(+) = inosine + NH4(+). Functionally, purine nucleoside enzyme that catalyzes the phosphorolysis of adenosine and inosine nucleosides, yielding D-ribose 1-phosphate and the respective free bases, adenine and hypoxanthine. Also catalyzes the phosphorolysis of S-methyl-5'-thioadenosine into adenine and S-methyl-5-thio-alpha-D-ribose 1-phosphate. Also has adenosine deaminase activity. The sequence is that of Purine nucleoside phosphorylase SERP0752 from Staphylococcus epidermidis (strain ATCC 35984 / DSM 28319 / BCRC 17069 / CCUG 31568 / BM 3577 / RP62A).